Here is a 660-residue protein sequence, read N- to C-terminus: Probable cation-transporting P-type ATPase J (660 aa).

Transmembrane regions (helical) follow at residues 33 to 53, 60 to 80, 94 to 114, 261 to 281, and 292 to 312; these read WAAL…CGAP, LFLA…LQAL, AAIG…IVIF, IGMV…GETL, and MIVA…LAAI. Residue Asp-340 is the 4-aspartylphosphate intermediate of the active site. The Mg(2+) site is built by Asp-544 and Asp-548. The chain crosses the membrane as a helical span at residues 598-618; that stretch reads IVVANLIVAVTFIAGLVVWDL.

It belongs to the cation transport ATPase (P-type) (TC 3.A.3) family. Type IB subfamily.

The protein localises to the cell membrane. The enzyme catalyses ATP + H2O = ADP + phosphate + H(+). This is Probable cation-transporting P-type ATPase J (ctpJ) from Mycobacterium tuberculosis (strain CDC 1551 / Oshkosh).